Here is a 383-residue protein sequence, read N- to C-terminus: MSQLLPQAYLTNFHNRIRNEDVPLFITAAPTRNHKRAKVVNYSEYDNDLLLDDFIEQDQNDDDEKVHSDNGKGEGEEVGHEDAVASNNNLPDLEQQDDPTGILRYPRIRETFLQSKIAVRYEQVLEAGVGGSGEAVGIAEDEGAGAYSSSSQPVVIPIRLNLEHNGHKIIDFFTWNLNDHSLTLEQFAQIYCQDLDFAHNLSLQNQIVAAINDQLQEYETLASVVVPDLHVIINLTCNLDSKLYEDNFEWNLNDQTLSPEQFAELVVQDLGLTREFMPAIAHALYESILKIKKDWLEGHLNPEHVANGAAFGCLSGIRLDIDTLGSNWCPKVEVLSQWEIEKREIEKERNMRRLKRESAKVDDRLARRRGKRRMDDLETTMRI.

Residues aspartate 61–histidine 80 are disordered. Positions glutamate 64–histidine 80 are enriched in basic and acidic residues.

Belongs to the SNF5 family.

It localises to the nucleus. Its function is as follows. Part of the chromatin structure-remodeling complex (RSC) which is involved in transcription regulation and nucleosome positioning. RSC is responsible for the transfer of a histone octamer from a nucleosome core particle to naked DNA. The reaction requires ATP and involves an activated RSC-nucleosome intermediate. Remodeling reaction also involves DNA translocation, DNA twist and conformational change. As a reconfigurer of centromeric and flanking nucleosomes, RSC complex is required both for proper kinetochore function in chromosome segregation and, via a PKC1-dependent signaling pathway, for organization of the cellular cytoskeleton. This subunit is essential for mitotic growth and required for cell cycle progression. This Eremothecium gossypii (strain ATCC 10895 / CBS 109.51 / FGSC 9923 / NRRL Y-1056) (Yeast) protein is Chromatin structure-remodeling complex subunit SFH1 (SFH1).